The sequence spans 444 residues: Baeyer-Villiger oxidase ptaJ (444 aa).

The protein belongs to the questin oxidase family. It depends on NADPH as a cofactor.

It functions in the pathway secondary metabolite biosynthesis. In terms of biological role, baeyer-Villiger oxidase; part of the gene cluster that mediates the biosynthesis of pestheic acid, a diphenyl ether which is a biosynthetic precursor of the unique chloropupukeananes. The biosynthesis initiates from condensation of acetate and malonate units catalyzed by the non-reducing PKS ptaA. As the ptaA protein is TE/CLC domain-deficient, hydrolysis and Claisen cyclization of the polyketide could be catalyzed by ptaB containing a beta-lactamase domain. The ptaB protein might hydrolyze the thioester bond between the ACP of ptaA and the intermediate to release atrochrysone carboxylic acid, which is spontaneously dehydrated to form endocrocin anthrone. Endocrocin anthrone is then converted to endocrocin, catalyzed by the anthrone oxygenase ptaC. Spontaneous decarboxylation of endocrocin occurs to generate emodin. An O-methyltransferase (ptaH or ptaI) could methylate emodin to form physcion. PtaJ could then catalyze the oxidative cleavage of physcion, and rotation of the intermediate could then afford desmethylisosulochrin. PtaF, a putative NADH-dependent oxidoreductase, might also participate in the oxidative cleavage step. Desmethylisosulochrin is then transformed by another O-methyltransferase (ptaH or ptaI) to form isosulochrin. Chlorination of isosulochrin by ptaM in the cyclohexadienone B ring then produces chloroisosulochrin. PtaE is responsible for the oxidative coupling reactions of both benzophenones isosulouchrin and chloroisosulouchrin to RES-1214-1 and pestheic acid respectively, regardless of chlorination. The chain is Baeyer-Villiger oxidase ptaJ from Pestalotiopsis fici (strain W106-1 / CGMCC3.15140).